Here is a 481-residue protein sequence, read N- to C-terminus: Glucan endo-1,3-beta-glucosidase 8 (481 aa).

The N-terminal stretch at 1–33 (MSNLLALVVGFVIVIGHLGILVNGLGVNWGTMA) is a signal peptide. 2 N-linked (GlcNAc...) asparagine glycosylation sites follow: asparagine 99 and asparagine 110. The active-site Proton donor is the glutamate 119. N-linked (GlcNAc...) asparagine glycosylation is found at asparagine 126 and asparagine 131. Glutamate 265 (nucleophile) is an active-site residue. Cysteines 367 and 428 form a disulfide. 2 N-linked (GlcNAc...) asparagine glycosylation sites follow: asparagine 409 and asparagine 440. A lipid anchor (GPI-anchor amidated serine) is attached at serine 455. Residues 456–481 (SASSFSCSSYSLVVLIVWFLLSGMMF) constitute a propeptide, removed in mature form.

Belongs to the glycosyl hydrolase 17 family. Post-translationally, contains two additional disulfide bonds.

The protein localises to the secreted. Its subcellular location is the cell wall. It localises to the cell membrane. The catalysed reaction is Hydrolysis of (1-&gt;3)-beta-D-glucosidic linkages in (1-&gt;3)-beta-D-glucans.. In Arabidopsis thaliana (Mouse-ear cress), this protein is Glucan endo-1,3-beta-glucosidase 8.